A 184-amino-acid chain; its full sequence is Ribosome-recycling factor (184 aa).

A compositionally biased stretch (basic and acidic residues) spans 133–162 (RDGMDNLKQDENKKEISEDERKRHETEVQK). Residues 133–163 (RDGMDNLKQDENKKEISEDERKRHETEVQKL) form a disordered region.

It belongs to the RRF family.

The protein resides in the cytoplasm. Responsible for the release of ribosomes from messenger RNA at the termination of protein biosynthesis. May increase the efficiency of translation by recycling ribosomes from one round of translation to another. The sequence is that of Ribosome-recycling factor from Sphingopyxis alaskensis (strain DSM 13593 / LMG 18877 / RB2256) (Sphingomonas alaskensis).